A 173-amino-acid chain; its full sequence is Crossover junction endodeoxyribonuclease RuvC (173 aa).

Catalysis depends on residues Asp11, Glu71, and Asp143. Residues Asp11, Glu71, and Asp143 each contribute to the Mg(2+) site.

This sequence belongs to the RuvC family. As to quaternary structure, homodimer which binds Holliday junction (HJ) DNA. The HJ becomes 2-fold symmetrical on binding to RuvC with unstacked arms; it has a different conformation from HJ DNA in complex with RuvA. In the full resolvosome a probable DNA-RuvA(4)-RuvB(12)-RuvC(2) complex forms which resolves the HJ. The cofactor is Mg(2+).

Its subcellular location is the cytoplasm. It carries out the reaction Endonucleolytic cleavage at a junction such as a reciprocal single-stranded crossover between two homologous DNA duplexes (Holliday junction).. Functionally, the RuvA-RuvB-RuvC complex processes Holliday junction (HJ) DNA during genetic recombination and DNA repair. Endonuclease that resolves HJ intermediates. Cleaves cruciform DNA by making single-stranded nicks across the HJ at symmetrical positions within the homologous arms, yielding a 5'-phosphate and a 3'-hydroxyl group; requires a central core of homology in the junction. The consensus cleavage sequence is 5'-(A/T)TT(C/G)-3'. Cleavage occurs on the 3'-side of the TT dinucleotide at the point of strand exchange. HJ branch migration catalyzed by RuvA-RuvB allows RuvC to scan DNA until it finds its consensus sequence, where it cleaves and resolves the cruciform DNA. In Brucella suis biovar 1 (strain 1330), this protein is Crossover junction endodeoxyribonuclease RuvC.